Here is a 525-residue protein sequence, read N- to C-terminus: MNDLKKSPLLILDFGSQYTQLIARRVREMGVYCEIYPYNINHEQFKKLNPCGVILSGGPSTVTHDANPRAPQWLFESDLPLLGICYGMQTMAVQLGGQVHSSTLREFGYAELRLHGHSQLLSNIEDRTAMDGSALLDVWMSHGDKVTELPPGFKVICETRNAPIAGMADESRQMYGLQFHPEVTHTLQGLRILQRFVVDICKASTDWTPEHIIDEAINKIREQVGTEKVLLGLSGGVDSSVVAALLHRAIGEQLVCVFVDTGLLRLNEAEQVLSMFGRHMGIRIIAVNAEDKFLTALKGVTCPEEKRKIIGRTFIEVFDEEAQKLTDIKWLAQGTIYPDVIESAATSTNDAAVVIKSHHNVGGLPDTLNLKLLEPIRELFKDEVRQVGLELGLPHDMVYRHPFPGPGLGVRILAEVKKEYADILRKADAIFIEELHNAQLYHKISQAFAVFLPVKSVGVMGDGRRYDYVICLRAVETVDFMTAHWSQLPWDFLGKVSNRIINEVEGVSRVTYDISGKPPATIEWE.

The Glutamine amidotransferase type-1 domain maps to 8–206 (PLLILDFGSQ…VVDICKASTD (199 aa)). Cys85 serves as the catalytic Nucleophile. Active-site residues include His180 and Glu182. A GMPS ATP-PPase domain is found at 207 to 400 (WTPEHIIDEA…LGLPHDMVYR (194 aa)). 234–240 (SGGVDSS) provides a ligand contact to ATP.

In terms of assembly, homodimer.

The enzyme catalyses XMP + L-glutamine + ATP + H2O = GMP + L-glutamate + AMP + diphosphate + 2 H(+). Its pathway is purine metabolism; GMP biosynthesis; GMP from XMP (L-Gln route): step 1/1. Its function is as follows. Catalyzes the synthesis of GMP from XMP. This chain is GMP synthase [glutamine-hydrolyzing], found in Legionella pneumophila (strain Lens).